The primary structure comprises 295 residues: Mycothiol acetyltransferase (295 aa).

N-acetyltransferase domains follow at residues 5–141 (VEIR…TPLP) and 149–295 (VRLR…MYRR). 1D-myo-inositol 2-(L-cysteinylamino)-2-deoxy-alpha-D-glucopyranoside is bound at residue E35. Position 76 to 78 (76 to 78 (LVV)) interacts with acetyl-CoA. E176, K215, and E229 together coordinate 1D-myo-inositol 2-(L-cysteinylamino)-2-deoxy-alpha-D-glucopyranoside. Acetyl-CoA contacts are provided by residues 233-235 (VGV) and 240-246 (RGTGLGR). Y267 contributes to the 1D-myo-inositol 2-(L-cysteinylamino)-2-deoxy-alpha-D-glucopyranoside binding site. Residue 272 to 277 (NTAAVR) coordinates acetyl-CoA.

The protein belongs to the acetyltransferase family. MshD subfamily. As to quaternary structure, monomer.

The catalysed reaction is 1D-myo-inositol 2-(L-cysteinylamino)-2-deoxy-alpha-D-glucopyranoside + acetyl-CoA = mycothiol + CoA + H(+). Catalyzes the transfer of acetyl from acetyl-CoA to desacetylmycothiol (Cys-GlcN-Ins) to form mycothiol. The protein is Mycothiol acetyltransferase of Thermobispora bispora (strain ATCC 19993 / DSM 43833 / CBS 139.67 / JCM 10125 / KCTC 9307 / NBRC 14880 / R51).